The following is a 287-amino-acid chain: UPF0354 protein SSP1020 (287 aa).

Belongs to the UPF0354 family.

The sequence is that of UPF0354 protein SSP1020 from Staphylococcus saprophyticus subsp. saprophyticus (strain ATCC 15305 / DSM 20229 / NCIMB 8711 / NCTC 7292 / S-41).